A 1228-amino-acid polypeptide reads, in one-letter code: Membrane-anchored lipid-binding protein LAM1 (1228 aa).

Residues 1 to 1062 (MHEHKAELRL…IFKCFSKVNK (1062 aa)) lie on the Cytoplasmic side of the membrane. One can recognise a PH domain in the interval 308-421 (EKGLSGWLYM…WINTLTSHKR (114 aa)). Residues 773-978 (EAWCYFQDNF…KTREYLKKFN (206 aa)) enclose the VASt domain. A helical membrane pass occupies residues 1063–1083 (TLYYCLLISAVTNLFFVGKSI). At 1084–1228 (HSYFSVKSAE…EYNRLSAIPV (145 aa)) the chain is on the lumenal side. N-linked (GlcNAc...) asparagine glycosylation occurs at asparagine 1205.

This sequence belongs to the SIP3 family.

The protein resides in the mitochondrion membrane. It localises to the endoplasmic reticulum membrane. In terms of biological role, involved in mitochondrial fragmentation during programmed cell death in response to high levels of alpha-factor mating pheromone or the drug amiodarone. May be involved in sterol transfer between intracellular membranes. The protein is Membrane-anchored lipid-binding protein LAM1 of Saccharomyces cerevisiae (strain ATCC 204508 / S288c) (Baker's yeast).